Consider the following 292-residue polypeptide: Glutamyl-Q tRNA(Asp) synthetase (292 aa).

L-glutamate contacts are provided by residues 9–13 (RFAPS) and Glu-45. Residues 12–22 (PSPSGPLHAGS) carry the 'HIGH' region motif. Zn(2+) contacts are provided by Cys-99, Cys-101, Tyr-121, and Cys-125. Tyr-184 and Arg-202 together coordinate L-glutamate. The 'KMSKS' region motif lies at 240-244 (KLSKQ). Residue Lys-243 coordinates ATP.

Belongs to the class-I aminoacyl-tRNA synthetase family. GluQ subfamily. Requires Zn(2+) as cofactor.

Functionally, catalyzes the tRNA-independent activation of glutamate in presence of ATP and the subsequent transfer of glutamate onto a tRNA(Asp). Glutamate is transferred on the 2-amino-5-(4,5-dihydroxy-2-cyclopenten-1-yl) moiety of the queuosine in the wobble position of the QUC anticodon. In Verminephrobacter eiseniae (strain EF01-2), this protein is Glutamyl-Q tRNA(Asp) synthetase.